The sequence spans 550 residues: Thioredoxin domain-containing protein 2 (550 aa).

The segment at 1 to 50 (MFKKNQKLSKDKGLEVNSVQAGAPEESDVKLNNGGKANERGSNEFLDTAQ) is disordered. Phosphoserine is present on residues Ser42 and Ser51. Positions 63-428 (MLHMSTEESE…IKSSEDVQPS (366 aa)) are disordered. Composition is skewed to polar residues over residues 73–87 (PPQQ…SENT), 96–105 (PKSSTKNTQL), and 112–140 (KTSS…QGST). Tandem repeats lie at residues 104-118 (QLKQ…SYSK), 119-133 (QTNS…AITT), 134-148 (YPKQ…ANGT), 149-163 (HDRE…EDLI), 164-178 (QSKK…EDSI), 179-193 (QSKK…EDPI), 194-208 (QSKK…EDTI), 209-223 (QSKN…EDPI), 224-238 (QSKK…EDSI), 239-252 (QSKK…SDTI), 253-267 (QSKE…QDTI), 268-282 (QSKG…KDSM), 283-297 (KSKE…KDSI), 298-312 (QSKE…QDSA), 313-327 (QPKE…KDSL), 328-342 (PSKE…EDTI), 343-357 (QAKE…DTIQ), 358-384 (AKEE…EDTI), 385-399 (QAKE…DTMQ), 400-412 (SKEE…EDTV), 413-425 (QSQE…SEDV), and 426-440 (QPSE…AEIE). The tract at residues 104–440 (QLKQEDISKT…EIFPFEAEIE (337 aa)) is 22 X 15 AA approximate tandem repeat of Q-P-K-X-G-D-I-P-K-S-[PS]-E-[KE]-X-I. 4 stretches are compositionally biased toward basic and acidic residues: residues 148 to 205 (THDR…KSLE), 217 to 259 (KSSE…ESET), 277 to 304 (QVKD…ENKI), and 313 to 348 (QPKE…KEEI). A Phosphoserine modification is found at Ser158. Ser351 and Ser379 each carry phosphoserine. Residues 401 to 550 (KEEITVSPED…KLEKSIAELK (150 aa)) enclose the Thioredoxin domain. Residue Ser407 is modified to Phosphoserine. Residues Cys477 and Cys480 are joined by a disulfide bond.

Testis-specific. Strongly expressed in the testicular seminiferous tubules, mostly in the round spermatids.

Its subcellular location is the cytoplasm. In terms of biological role, probably plays a regulatory role in sperm development. May participate in regulation of fibrous sheath (FS) assembly by supporting the formation of disulfide bonds during sperm tail morphogenesis. May also be required to rectify incorrect disulfide pairing and generate suitable pairs between the FS constituents. Can reduce disulfide bonds in vitro in the presence of NADP and thioredoxin reductase. The chain is Thioredoxin domain-containing protein 2 (Txndc2) from Rattus norvegicus (Rat).